Reading from the N-terminus, the 378-residue chain is Transaldolase 1 (378 aa).

The active-site Schiff-base intermediate with substrate is the K146.

The protein belongs to the transaldolase family. Type 2 subfamily.

The protein localises to the cytoplasm. It carries out the reaction D-sedoheptulose 7-phosphate + D-glyceraldehyde 3-phosphate = D-erythrose 4-phosphate + beta-D-fructose 6-phosphate. Its pathway is carbohydrate degradation; pentose phosphate pathway; D-glyceraldehyde 3-phosphate and beta-D-fructose 6-phosphate from D-ribose 5-phosphate and D-xylulose 5-phosphate (non-oxidative stage): step 2/3. Functionally, transaldolase is important for the balance of metabolites in the pentose-phosphate pathway. The sequence is that of Transaldolase 1 from Streptomyces avermitilis (strain ATCC 31267 / DSM 46492 / JCM 5070 / NBRC 14893 / NCIMB 12804 / NRRL 8165 / MA-4680).